The chain runs to 178 residues: Large ribosomal subunit protein bL17 (178 aa).

Belongs to the bacterial ribosomal protein bL17 family. Part of the 50S ribosomal subunit. Contacts protein L32.

This chain is Large ribosomal subunit protein bL17, found in Lachnospira eligens (strain ATCC 27750 / DSM 3376 / VPI C15-48 / C15-B4) (Eubacterium eligens).